Here is a 358-residue protein sequence, read N- to C-terminus: L-lysine 3-hydroxylase (358 aa).

Residues H178, E180, and H314 each contribute to the Fe cation site. R328 lines the 2-oxoglutarate pocket.

This sequence belongs to the clavaminate synthase family. Fe(2+) is required as a cofactor.

The catalysed reaction is L-lysine + 2-oxoglutarate + O2 = (3S)-3-hydroxy-L-lysine + succinate + CO2. In terms of biological role, alpha-ketoglutarate-dependent dioxygenase that in vitro catalyzes the regio- and stereoselective hydroxylation of L-lysine, leading to (3S)-3-hydroxy-L-lysine. Can also use (5R)-5-hydroxy-L-lysine as substrate, but neither D-lysine nor L-ornithine. The chain is L-lysine 3-hydroxylase from Catenulispora acidiphila (strain DSM 44928 / JCM 14897 / NBRC 102108 / NRRL B-24433 / ID139908).